The primary structure comprises 705 residues: Frizzled-4 (705 aa).

Residues 1-22 form the signal peptide; the sequence is MKPTCILCLLVVILLHPRISKS. Residues 21 to 37 show a composition bias toward low complexity; sequence KSSTSGNPSASSSSSSP. A disordered region spans residues 21–40; the sequence is KSSTSGNPSASSSSSSPPEI. Topologically, residues 23–233 are extracellular; it reads STSGNPSASS…FTPAEKHLAE (211 aa). The FZ domain maps to 41–163; the sequence is PAFRQCETIR…NNHETMCMEG (123 aa). 5 cysteine pairs are disulfide-bonded: C46-C107, C54-C100, C91-C130, C119-C160, and C123-C147. N60 carries N-linked (GlcNAc...) asparagine glycosylation. The chain crosses the membrane as a helical span at residues 234 to 254; that stretch reads IWVSTWAYAALGLALVATVCL. Residues 255–270 lie on the Cytoplasmic side of the membrane; sequence LASDGSRLASAKWSRL. A helical membrane pass occupies residues 271 to 291; that stretch reads LSPLIWCHNMVTLGWAVRFMV. Residues 292–322 are Extracellular-facing; the sequence is GRTGTACGTDPQAPNESLLTVDGLSNASCAS. 2 N-linked (GlcNAc...) asparagine glycosylation sites follow: N306 and N317. A helical membrane pass occupies residues 323–343; that stretch reads VFLMRYYFGMAACAWWAVLCL. Residues 344–386 lie on the Cytoplasmic side of the membrane; the sequence is GWHRDIRRHSPDSKGHVVIPSNFGGSPAKRNSAKTAQQDLTQN. Residues 387–407 form a helical membrane-spanning segment; that stretch reads NFVCFVAWGLPAFQTSAVIVA. Topologically, residues 408–430 are extracellular; it reads RFVDADELLGACFVGNQSDKALQ. N423 is a glycosylation site (N-linked (GlcNAc...) asparagine). Residues 431 to 451 form a helical membrane-spanning segment; sequence ILVATPVFCYWIFGSMNLISG. The Cytoplasmic portion of the chain corresponds to 452 to 483; that stretch reads YLVHCRTKEILRNSNALSVQQQLQQLSAHSSS. The helical transmembrane segment at 484 to 504 threads the bilayer; it reads GIGIFLFIYGLACAMLLLAVI. Residues 505-529 lie on the Extracellular side of the membrane; the sequence is YEFANIDVWLGSGDTNTPLWPFLLR. The chain crosses the membrane as a helical span at residues 530–550; sequence AFMELMLGICCFAWVLGPSIS. The Cytoplasmic segment spans residues 551-705; sequence TLYKRQVSNG…LQQYGNETLL (155 aa). Residues 635–681 form a disordered region; sequence RSVHHQQRHSPHHHHHQQQQHHQFHPHHNHQHHSTSSHRLYYPPGSY. Basic residues predominate over residues 636–670; the sequence is SVHHQQRHSPHHHHHQQQQHHQFHPHHNHQHHSTS. The PDZ-binding motif lies at 703–705; sequence TLL.

The protein belongs to the G-protein coupled receptor Fz/Smo family.

It is found in the membrane. Its function is as follows. Receptor for Wnt proteins. Most of frizzled receptors are coupled to the beta-catenin canonical signaling pathway, which leads to the activation of disheveled proteins, inhibition of GSK-3 kinase, nuclear accumulation of beta-catenin and activation of Wnt target genes. A second signaling pathway involving PKC and calcium fluxes has been seen for some family members, but it is not yet clear if it represents a distinct pathway or if it can be integrated in the canonical pathway, as PKC seems to be required for Wnt-mediated inactivation of GSK-3 kinase. Both pathways seem to involve interactions with G-proteins. May be involved in transduction and intercellular transmission of polarity information during tissue morphogenesis and/or in differentiated tissues. Required to coordinate the cytoskeletons of epidermal cells to produce a parallel array of cuticular hairs and bristles. The protein is Frizzled-4 (fz4) of Drosophila melanogaster (Fruit fly).